Consider the following 153-residue polypeptide: Putative transcription factor YdeB (153 aa).

Belongs to the CarD family.

The chain is Putative transcription factor YdeB (ydeB) from Bacillus subtilis (strain 168).